The primary structure comprises 288 residues: Putative branched-chain-amino-acid aminotransferase (288 aa).

K146 is modified (N6-(pyridoxal phosphate)lysine).

This sequence belongs to the class-IV pyridoxal-phosphate-dependent aminotransferase family. Pyridoxal 5'-phosphate is required as a cofactor.

It catalyses the reaction L-leucine + 2-oxoglutarate = 4-methyl-2-oxopentanoate + L-glutamate. The catalysed reaction is L-isoleucine + 2-oxoglutarate = (S)-3-methyl-2-oxopentanoate + L-glutamate. The enzyme catalyses L-valine + 2-oxoglutarate = 3-methyl-2-oxobutanoate + L-glutamate. The protein operates within amino-acid biosynthesis; L-isoleucine biosynthesis; L-isoleucine from 2-oxobutanoate: step 4/4. It functions in the pathway amino-acid biosynthesis; L-leucine biosynthesis; L-leucine from 3-methyl-2-oxobutanoate: step 4/4. Its pathway is amino-acid biosynthesis; L-valine biosynthesis; L-valine from pyruvate: step 4/4. In terms of biological role, acts on leucine, isoleucine and valine. This Methanocaldococcus jannaschii (strain ATCC 43067 / DSM 2661 / JAL-1 / JCM 10045 / NBRC 100440) (Methanococcus jannaschii) protein is Putative branched-chain-amino-acid aminotransferase (ilvE).